Consider the following 312-residue polypeptide: Methionyl-tRNA formyltransferase (312 aa).

109-112 is a binding site for (6S)-5,6,7,8-tetrahydrofolate; that stretch reads SLLP.

This sequence belongs to the Fmt family.

The enzyme catalyses L-methionyl-tRNA(fMet) + (6R)-10-formyltetrahydrofolate = N-formyl-L-methionyl-tRNA(fMet) + (6S)-5,6,7,8-tetrahydrofolate + H(+). In terms of biological role, attaches a formyl group to the free amino group of methionyl-tRNA(fMet). The formyl group appears to play a dual role in the initiator identity of N-formylmethionyl-tRNA by promoting its recognition by IF2 and preventing the misappropriation of this tRNA by the elongation apparatus. The sequence is that of Methionyl-tRNA formyltransferase from Anaeromyxobacter sp. (strain K).